A 255-amino-acid polypeptide reads, in one-letter code: 5'-nucleotidase SurE (255 aa).

4 residues coordinate a divalent metal cation: Asp-8, Asp-9, Ser-39, and Asn-91.

The protein belongs to the SurE nucleotidase family. The cofactor is a divalent metal cation.

Its subcellular location is the cytoplasm. It catalyses the reaction a ribonucleoside 5'-phosphate + H2O = a ribonucleoside + phosphate. Its function is as follows. Nucleotidase that shows phosphatase activity on nucleoside 5'-monophosphates. In Nitrosospira multiformis (strain ATCC 25196 / NCIMB 11849 / C 71), this protein is 5'-nucleotidase SurE.